A 232-amino-acid chain; its full sequence is Glutathione S-transferase U10 (232 aa).

Positions 6–85 constitute a GST N-terminal domain; sequence SKVILHGTWI…YIDETWTNSP (80 aa). Glutathione contacts are provided by residues 16-17, 42-43, 56-57, and 69-70; these read ST, NK, KI, and ES. Residues 91 to 226 enclose the GST C-terminal domain; the sequence is DPYERAQVRF…FIQKYRQKCL (136 aa).

This sequence belongs to the GST superfamily. Tau family.

It localises to the cytoplasm. The protein resides in the cytosol. The enzyme catalyses RX + glutathione = an S-substituted glutathione + a halide anion + H(+). May be involved in the conjugation of reduced glutathione to a wide number of exogenous and endogenous hydrophobic electrophiles and have a detoxification role against certain herbicides. The polypeptide is Glutathione S-transferase U10 (GSTU10) (Arabidopsis thaliana (Mouse-ear cress)).